A 297-amino-acid chain; its full sequence is Bifunctional protein FolD (297 aa).

NADP(+) contacts are provided by residues 166-168 (GRS), Ser-191, and Ile-232.

The protein belongs to the tetrahydrofolate dehydrogenase/cyclohydrolase family. As to quaternary structure, homodimer.

The catalysed reaction is (6R)-5,10-methylene-5,6,7,8-tetrahydrofolate + NADP(+) = (6R)-5,10-methenyltetrahydrofolate + NADPH. It catalyses the reaction (6R)-5,10-methenyltetrahydrofolate + H2O = (6R)-10-formyltetrahydrofolate + H(+). It functions in the pathway one-carbon metabolism; tetrahydrofolate interconversion. Catalyzes the oxidation of 5,10-methylenetetrahydrofolate to 5,10-methenyltetrahydrofolate and then the hydrolysis of 5,10-methenyltetrahydrofolate to 10-formyltetrahydrofolate. In Phenylobacterium zucineum (strain HLK1), this protein is Bifunctional protein FolD.